Consider the following 2035-residue polypeptide: Proline-rich protein 12 (2035 aa).

Disordered regions lie at residues 210–280 (GGGV…ERAL), 292–311 (RPAS…LQHY), 329–584 (CSPL…GAPG), and 645–685 (QAPS…GTPY). Residues 223-240 (QTPPYRPGPPDPPPPPRH) are compositionally biased toward pro residues. A compositionally biased stretch (low complexity) spans 249–261 (ASSSAATAAEPSS). The span at 296 to 305 (AQPPPPPPPA) shows a compositional bias: pro residues. A phosphoserine mark is found at Ser330 and Ser338. Residues 338 to 364 (SPGAGEPSKGGPSGATAGAAGRATGPE) are compositionally biased toward low complexity. Residues 365 to 377 (TAGGGAAGGGGGY) show a composition bias toward gly residues. 2 stretches are compositionally biased toward low complexity: residues 408–429 (STAT…AGKA) and 437–455 (SQAY…QAYG). The segment covering 476 to 487 (PPQPPSGPPPPG) has biased composition (pro residues). Composition is skewed to polar residues over residues 490-501 (TCQSYSPDQLQG) and 520-534 (GLPT…STGH). Over residues 540–555 (GHGGGWGPSSLGGGGE) the composition is skewed to gly residues. Ser648 is modified (phosphoserine). The span at 670-681 (GLGGSGGAGGAP) shows a compositional bias: gly residues. A Phosphothreonine modification is found at Thr735. Disordered regions lie at residues 755–844 (AFLQ…PLQL), 851–870 (HGLE…SLEP), 879–920 (GALE…APRF), and 946–1061 (EMFG…CSTK). The segment covering 830–841 (PQPPPPPPPPMP) has biased composition (pro residues). Ser859 carries the phosphoserine modification. Positions 1031 to 1046 (SAPPPPPPPPPPPPVS) are enriched in pro residues. Phosphoserine is present on residues Ser1070 and Ser1128. Disordered regions lie at residues 1112 to 1244 (RRLP…DHNS), 1288 to 1355 (PLYQ…SPCK), 1367 to 1567 (TLPS…GEGI), and 1662 to 1839 (HRPP…PGRL). Basic residues predominate over residues 1190–1199 (KPRGRGRGRG). A compositionally biased stretch (basic and acidic residues) spans 1200 to 1214 (RKAEEMGGTRLEPLK). Lys1214 is modified (N6-acetyllysine). Position 1295 is a phosphothreonine (Thr1295). Ser1299 carries the post-translational modification Phosphoserine. A compositionally biased stretch (pro residues) spans 1314–1329 (QPPPPTVPTVPHPAPS). Ser1372, Ser1373, and Ser1378 each carry phosphoserine. A compositionally biased stretch (pro residues) spans 1449 to 1529 (PPTPPPAPTP…PPEEPPAPSP (81 aa)). Residues 1535 to 1547 (PDARPLHLAKKQE) are compositionally biased toward basic and acidic residues. Thr1555 bears the Phosphothreonine mark. Ser1562 is subject to Phosphoserine. A compositionally biased stretch (basic and acidic residues) spans 1698–1709 (ETPEKMTSEKPP). Phosphothreonine is present on Thr1699. Pro residues predominate over residues 1710-1730 (EPAPEPAVPEPPAPEKPSPPR). The segment covering 1731–1768 (PVEKEKEKEKEKEKEKERVTRPLRSERATSGRQMRTDR) has biased composition (basic and acidic residues). Residues 1769-1779 (SLATGQSTTSR) are compositionally biased toward polar residues. The segment covering 1817–1828 (SSSDSESSPGAP) has biased composition (low complexity). A Phosphoserine modification is found at Ser1924.

In terms of tissue distribution, expressed in brain.

The protein localises to the nucleus. Its subcellular location is the postsynaptic density. It localises to the synapse. The protein resides in the synaptosome. This chain is Proline-rich protein 12, found in Mus musculus (Mouse).